The following is a 624-amino-acid chain: MNAPDKFSQLMSLTREPLPASRKIYVPGTQADIQVPMREIMQSNGEAVVVYDTSGPYTDPNANIDVRQGLPSVRSPWIESRGDTESYTGRTPFALDDGLKNGDSESLASLRVQAAGLQRTPRRAKAGANVSQMHYARSGIITPEMEYVAIRENQKLAWMEQYLGNAEREARLAGNSFGANIPKIMTPEFVRDEVARGRAIIPANINHPEVEPMVIGRNFLVKINANIGNSAVTSSIEEEVEKLVWSMRWGADTVMDLSTGRNIHTTRDWILRNSPVPIGTVPIYQALEKVGGVAEDLTWAIFRDTLIEQAEQGVDYFTVHAGVRLAFIHLTANRMTGIVSRGGSIMAKWCIAHHKENFIYSHFDEMTEILKAYDVSYSLGDGLRPGSGADANDEAQFAELRTLGELTQQAWQQDVQVMIEGPGHVPMHMVQANMTEQLKACHEAPFYTLGPLTTDIAPGYDHITSGIGAAMIGWFGTAMLCYVTPKEHLGLPDRDDVKVGIITYKIAAHVADVAKGHPGVRARDDALSKARFEFRWMDQFNLSLDPDTARNFHDETLPKDSSKVAHFCSMCGPKFCSMKISQEVRDYAKTRGVSEEQALQSGMQTKSEEFRLAGGEMYIPISPA.

The tract at residues 75–99 is disordered; it reads SPWIESRGDTESYTGRTPFALDDGL. Substrate is bound by residues Asn-226, Met-255, Tyr-284, His-320, 340–342, 381–384, and Glu-420; these read SRG and DGLR. Residue His-424 participates in Zn(2+) binding. Tyr-447 is a binding site for substrate. His-488 is a Zn(2+) binding site. 3 residues coordinate [4Fe-4S] cluster: Cys-568, Cys-571, and Cys-576.

This sequence belongs to the ThiC family. As to quaternary structure, homodimer. It depends on [4Fe-4S] cluster as a cofactor.

The enzyme catalyses 5-amino-1-(5-phospho-beta-D-ribosyl)imidazole + S-adenosyl-L-methionine = 4-amino-2-methyl-5-(phosphooxymethyl)pyrimidine + CO + 5'-deoxyadenosine + formate + L-methionine + 3 H(+). It functions in the pathway cofactor biosynthesis; thiamine diphosphate biosynthesis. Functionally, catalyzes the synthesis of the hydroxymethylpyrimidine phosphate (HMP-P) moiety of thiamine from aminoimidazole ribotide (AIR) in a radical S-adenosyl-L-methionine (SAM)-dependent reaction. This Albidiferax ferrireducens (strain ATCC BAA-621 / DSM 15236 / T118) (Rhodoferax ferrireducens) protein is Phosphomethylpyrimidine synthase.